The chain runs to 86 residues: CRISPR-associated endoribonuclease Cas2 (86 aa).

Aspartate 8 contributes to the Mg(2+) binding site.

Belongs to the CRISPR-associated endoribonuclease Cas2 protein family. Homodimer, forms a heterotetramer with a Cas1 homodimer. The cofactor is Mg(2+).

In terms of biological role, CRISPR (clustered regularly interspaced short palindromic repeat), is an adaptive immune system that provides protection against mobile genetic elements (viruses, transposable elements and conjugative plasmids). CRISPR clusters contain sequences complementary to antecedent mobile elements and target invading nucleic acids. CRISPR clusters are transcribed and processed into CRISPR RNA (crRNA). Functions as a ssRNA-specific endoribonuclease. Involved in the integration of spacer DNA into the CRISPR cassette. Plasmid targeted by CRISPR locus P1 transform wild-type cells very poorly. This Haloferax volcanii (strain ATCC 29605 / DSM 3757 / JCM 8879 / NBRC 14742 / NCIMB 2012 / VKM B-1768 / DS2) (Halobacterium volcanii) protein is CRISPR-associated endoribonuclease Cas2.